Here is a 616-residue protein sequence, read N- to C-terminus: E3 ubiquitin-protein ligase DTX4 (616 aa).

2 WWE domains span residues 1–78 and 79–155; these read MLLA…PVRR and NYYD…RVRR. Disordered regions lie at residues 223 to 254 and 355 to 387; these read VGKL…PSQV and PPPV…GKTP. Over residues 375 to 384 the composition is skewed to basic residues; it reads KTTKKQAKKG. An RING-type; atypical zinc finger spans residues 406–465; that stretch reads CTICMERLTAPSGYKGPQPTVKPDLVGKLSRCGHIYHIYCLVAMYNNGNKDGSLQCPTCK.

It belongs to the Deltex family. Interacts with NLRP4. As to expression, expressed in brain, testis, embryonic fibroblasts and thymocytes.

The protein localises to the cytoplasm. It carries out the reaction S-ubiquitinyl-[E2 ubiquitin-conjugating enzyme]-L-cysteine + [acceptor protein]-L-lysine = [E2 ubiquitin-conjugating enzyme]-L-cysteine + N(6)-ubiquitinyl-[acceptor protein]-L-lysine.. The protein operates within protein modification; protein ubiquitination. Its function is as follows. Functions as a ubiquitin ligase protein in vivo, mediating 'Lys48'-linked polyubiquitination and promoting degradation of TBK1, targeting to TBK1 requires interaction with NLRP4. Regulator of Notch signaling, a signaling pathway involved in cell-cell communications that regulates a broad spectrum of cell-fate determinations. This chain is E3 ubiquitin-protein ligase DTX4 (Dtx4), found in Mus musculus (Mouse).